We begin with the raw amino-acid sequence, 328 residues long: Ferredoxin--NADP reductase 2 (328 aa).

Positions 16, 35, 43, 48, 88, 123, 284, and 325 each coordinate FAD.

Belongs to the ferredoxin--NADP reductase type 2 family. As to quaternary structure, homodimer. FAD is required as a cofactor.

It catalyses the reaction 2 reduced [2Fe-2S]-[ferredoxin] + NADP(+) + H(+) = 2 oxidized [2Fe-2S]-[ferredoxin] + NADPH. In Oceanobacillus iheyensis (strain DSM 14371 / CIP 107618 / JCM 11309 / KCTC 3954 / HTE831), this protein is Ferredoxin--NADP reductase 2.